Reading from the N-terminus, the 162-residue chain is Lectin BRA-3 (162 aa).

The signal sequence occupies residues methionine 1–cysteine 24. The C-type lectin domain occupies threonine 25–methionine 152. Cystine bridges form between cysteine 26–cysteine 39, cysteine 56–cysteine 150, and cysteine 125–cysteine 142.

In terms of assembly, homotetramer; disulfide-linked. Coelemic fluid.

Sugar-binding protein which recognizes specific carbohydrate structures and agglutinates a variety of animal cells by binding to cell-surface glycoproteins and glycolipids. Calcium-dependent lectin. Invertebrate lectins may be involved in defense functions. The chain is Lectin BRA-3 from Megabalanus rosa (Acorn barnacle).